The sequence spans 256 residues: Pimeloyl-[acyl-carrier protein] methyl ester esterase (256 aa).

An AB hydrolase-1 domain is found at 15–242 (HLVLLHGWGL…AAHAPFISHP (228 aa)). Residues W22, 82 to 83 (SL), and 143 to 147 (FLALQ) each bind substrate. Catalysis depends on S82, which acts as the Nucleophile. Active-site residues include D207 and H235. H235 serves as a coordination point for substrate.

Belongs to the AB hydrolase superfamily. Carboxylesterase BioH family. Monomer.

The protein resides in the cytoplasm. The enzyme catalyses 6-carboxyhexanoyl-[ACP] methyl ester + H2O = 6-carboxyhexanoyl-[ACP] + methanol + H(+). It functions in the pathway cofactor biosynthesis; biotin biosynthesis. Its function is as follows. The physiological role of BioH is to remove the methyl group introduced by BioC when the pimeloyl moiety is complete. It allows to synthesize pimeloyl-ACP via the fatty acid synthetic pathway through the hydrolysis of the ester bonds of pimeloyl-ACP esters. In Shigella boydii serotype 18 (strain CDC 3083-94 / BS512), this protein is Pimeloyl-[acyl-carrier protein] methyl ester esterase.